A 287-amino-acid chain; its full sequence is 4-diphosphocytidyl-2-C-methyl-D-erythritol kinase (287 aa).

Residue K12 is part of the active site. 94–104 (PAQAGMGGGSS) provides a ligand contact to ATP. D136 is a catalytic residue.

It belongs to the GHMP kinase family. IspE subfamily.

It carries out the reaction 4-CDP-2-C-methyl-D-erythritol + ATP = 4-CDP-2-C-methyl-D-erythritol 2-phosphate + ADP + H(+). Its pathway is isoprenoid biosynthesis; isopentenyl diphosphate biosynthesis via DXP pathway; isopentenyl diphosphate from 1-deoxy-D-xylulose 5-phosphate: step 3/6. Functionally, catalyzes the phosphorylation of the position 2 hydroxy group of 4-diphosphocytidyl-2C-methyl-D-erythritol. This is 4-diphosphocytidyl-2-C-methyl-D-erythritol kinase from Albidiferax ferrireducens (strain ATCC BAA-621 / DSM 15236 / T118) (Rhodoferax ferrireducens).